Consider the following 492-residue polypeptide: Phytoene desaturase (lycopene-forming) (492 aa).

An FAD-binding site is contributed by 5–38 (VVIGAGFGGLALAIRLQAAGIPTVLLEQRDKPGG).

This sequence belongs to the carotenoid/retinoid oxidoreductase family. It depends on FAD as a cofactor.

The catalysed reaction is 15-cis-phytoene + 4 A = all-trans-lycopene + 4 AH2. Its pathway is carotenoid biosynthesis; lycopene biosynthesis. Its function is as follows. This enzyme converts phytoene into lycopene via the intermediaries of phytofluene, zeta-carotene and neurosporene by the introduction of four double bonds. This chain is Phytoene desaturase (lycopene-forming) (crtI), found in Pseudescherichia vulneris (Escherichia vulneris).